Here is a 347-residue protein sequence, read N- to C-terminus: Globoside alpha-1,3-N-acetylgalactosaminyltransferase 1 (347 aa).

Topologically, residues 1-5 (MHRRR) are cytoplasmic. Residues 6–26 (LALGLGFCLLAGTSLSVLWVY) form a helical; Signal-anchor for type II membrane protein membrane-spanning segment. Over 27–347 (LENWLPVSYV…LDKDISCLRS (321 aa)) the chain is Lumenal. A glycan (N-linked (GlcNAc...) asparagine) is linked at Asn-108. Residues 116–121 (FAVGKY), 206–208 (DVD), and 228–231 (HPSY) contribute to the substrate site. Mn(2+)-binding residues include Asp-206 and Asp-208. The active-site Nucleophile is Glu-298.

This sequence belongs to the glycosyltransferase 6 family. It depends on Mn(2+) as a cofactor. As to expression, widely expressed. Expressed at higher level in placenta, ovary and peripheral blood leukocyte, whereas it is weakly expressed in liver, thymus, and testis. Expressed in bone marrow erythroid cells.

The protein resides in the golgi apparatus membrane. It functions in the pathway protein modification; protein glycosylation. In terms of biological role, has lost the ability to synthesize Forssman glycolipid antigen (FORS1/FG). Might have acquired an alternative function in glycosphingolipid metabolism, but it remains to be established. It appears to have drifted more slowly than confirmed pseudogenes in the glycosyltransferase 6 family, suggesting that it has remained under evolutionary pressure. This is Globoside alpha-1,3-N-acetylgalactosaminyltransferase 1 from Homo sapiens (Human).